The primary structure comprises 201 residues: Peptidyl-prolyl cis-trans isomerase FKBP11 (201 aa).

The first 27 residues, M1–A27, serve as a signal peptide directing secretion. The 88-residue stretch at G57 to I144 folds into the PPIase FKBP-type domain. The helical transmembrane segment at I156–L176 threads the bilayer.

It belongs to the FKBP-type PPIase family. Interacts with IFITM5.

The protein localises to the membrane. The enzyme catalyses [protein]-peptidylproline (omega=180) = [protein]-peptidylproline (omega=0). Functionally, PPIases accelerate the folding of proteins during protein synthesis. In Homo sapiens (Human), this protein is Peptidyl-prolyl cis-trans isomerase FKBP11 (FKBP11).